The following is a 266-amino-acid chain: Flavin-dependent thymidylate synthase (266 aa).

Positions 11–222 constitute a ThyX domain; the sequence is GFIRLVDYMG…PLACASFERH (212 aa). Residues Ser-57, 80 to 82, and Glu-88 contribute to the FAD site; that span reads RHR. Residues 77–80, 88–92, and Arg-161 each bind dUMP; these read QWIR and EISGR. The short motif at 80–90 is the ThyX motif element; the sequence is RHRTARLNEIS. FAD-binding positions include 177–179 and His-183; that span reads DLH. Arg-188 contacts dUMP. Residue Arg-188 is the Involved in ionization of N3 of dUMP, leading to its activation of the active site.

This sequence belongs to the thymidylate synthase ThyX family. Homotetramer. FAD serves as cofactor.

The enzyme catalyses dUMP + (6R)-5,10-methylene-5,6,7,8-tetrahydrofolate + NADPH + H(+) = dTMP + (6S)-5,6,7,8-tetrahydrofolate + NADP(+). Its pathway is pyrimidine metabolism; dTTP biosynthesis. Functionally, catalyzes the reductive methylation of 2'-deoxyuridine-5'-monophosphate (dUMP) to 2'-deoxythymidine-5'-monophosphate (dTMP) while utilizing 5,10-methylenetetrahydrofolate (mTHF) as the methyl donor, and NADPH and FADH(2) as the reductant. The sequence is that of Flavin-dependent thymidylate synthase from Treponema denticola (strain ATCC 35405 / DSM 14222 / CIP 103919 / JCM 8153 / KCTC 15104).